Reading from the N-terminus, the 325-residue chain is GMP reductase (325 aa).

Cys-174 serves as the catalytic Thioimidate intermediate. 203–226 is an NADP(+) binding site; it reads LIADGGIRTHGDIAKSIRFGATMV.

It belongs to the IMPDH/GMPR family. GuaC type 2 subfamily.

It catalyses the reaction IMP + NH4(+) + NADP(+) = GMP + NADPH + 2 H(+). Catalyzes the irreversible NADPH-dependent deamination of GMP to IMP. It functions in the conversion of nucleobase, nucleoside and nucleotide derivatives of G to A nucleotides, and in maintaining the intracellular balance of A and G nucleotides. This Pediococcus pentosaceus (strain ATCC 25745 / CCUG 21536 / LMG 10740 / 183-1w) protein is GMP reductase.